The following is a 350-amino-acid chain: Ookinete surface protein PIMMS43 (350 aa).

Positions methionine 1–glycine 24 are cleaved as a signal peptide. Residues asparagine 330 to leucine 350 form a helical membrane-spanning segment.

Forms multimers, perhaps with an unknown protein(s).

It localises to the membrane. Functionally, involved in ookinete evasion of the mosquito complement-like response, oocyst maturation, sporozoite development and infectivity. This Plasmodium berghei (strain Anka) protein is Ookinete surface protein PIMMS43.